The primary structure comprises 476 residues: Aspartyl/glutamyl-tRNA(Asn/Gln) amidotransferase subunit B (476 aa).

It belongs to the GatB/GatE family. GatB subfamily. Heterotrimer of A, B and C subunits.

The catalysed reaction is L-glutamyl-tRNA(Gln) + L-glutamine + ATP + H2O = L-glutaminyl-tRNA(Gln) + L-glutamate + ADP + phosphate + H(+). It catalyses the reaction L-aspartyl-tRNA(Asn) + L-glutamine + ATP + H2O = L-asparaginyl-tRNA(Asn) + L-glutamate + ADP + phosphate + 2 H(+). Functionally, allows the formation of correctly charged Asn-tRNA(Asn) or Gln-tRNA(Gln) through the transamidation of misacylated Asp-tRNA(Asn) or Glu-tRNA(Gln) in organisms which lack either or both of asparaginyl-tRNA or glutaminyl-tRNA synthetases. The reaction takes place in the presence of glutamine and ATP through an activated phospho-Asp-tRNA(Asn) or phospho-Glu-tRNA(Gln). In Solidesulfovibrio magneticus (strain ATCC 700980 / DSM 13731 / RS-1) (Desulfovibrio magneticus), this protein is Aspartyl/glutamyl-tRNA(Asn/Gln) amidotransferase subunit B.